The primary structure comprises 118 residues: Large ribosomal subunit protein uL18 (118 aa).

It belongs to the universal ribosomal protein uL18 family. In terms of assembly, part of the 50S ribosomal subunit; part of the 5S rRNA/L5/L18/L25 subcomplex. Contacts the 5S and 23S rRNAs.

This is one of the proteins that bind and probably mediate the attachment of the 5S RNA into the large ribosomal subunit, where it forms part of the central protuberance. This chain is Large ribosomal subunit protein uL18, found in Campylobacter jejuni subsp. jejuni serotype O:2 (strain ATCC 700819 / NCTC 11168).